Here is a 146-residue protein sequence, read N- to C-terminus: Large ribosomal subunit protein uL16 (146 aa).

Belongs to the universal ribosomal protein uL16 family. In terms of assembly, part of the 50S ribosomal subunit.

Binds 23S rRNA and is also seen to make contacts with the A and possibly P site tRNAs. The protein is Large ribosomal subunit protein uL16 of Thermomicrobium roseum (strain ATCC 27502 / DSM 5159 / P-2).